The sequence spans 235 residues: Segregation and condensation protein A (235 aa).

Belongs to the ScpA family. As to quaternary structure, component of a cohesin-like complex composed of ScpA, ScpB and the Smc homodimer, in which ScpA and ScpB bind to the head domain of Smc. The presence of the three proteins is required for the association of the complex with DNA.

The protein localises to the cytoplasm. Participates in chromosomal partition during cell division. May act via the formation of a condensin-like complex containing Smc and ScpB that pull DNA away from mid-cell into both cell halves. In Streptococcus equi subsp. zooepidemicus (strain H70), this protein is Segregation and condensation protein A.